The primary structure comprises 387 residues: Phosphoglycerate kinase (387 aa).

Substrate is bound by residues 21-23 (DLN), Arg-36, 59-62 (HLGR), Arg-113, and Arg-146. ATP-binding positions include Lys-197, Glu-314, and 340–343 (GGDT).

Belongs to the phosphoglycerate kinase family. In terms of assembly, monomer.

It is found in the cytoplasm. The enzyme catalyses (2R)-3-phosphoglycerate + ATP = (2R)-3-phospho-glyceroyl phosphate + ADP. It functions in the pathway carbohydrate degradation; glycolysis; pyruvate from D-glyceraldehyde 3-phosphate: step 2/5. The chain is Phosphoglycerate kinase from Alcanivorax borkumensis (strain ATCC 700651 / DSM 11573 / NCIMB 13689 / SK2).